The chain runs to 174 residues: ATP-dependent protease subunit HslV (174 aa).

Residue T2 is part of the active site. G157, C160, and T163 together coordinate Na(+).

Belongs to the peptidase T1B family. HslV subfamily. A double ring-shaped homohexamer of HslV is capped on each side by a ring-shaped HslU homohexamer. The assembly of the HslU/HslV complex is dependent on binding of ATP.

It localises to the cytoplasm. It carries out the reaction ATP-dependent cleavage of peptide bonds with broad specificity.. With respect to regulation, allosterically activated by HslU binding. Protease subunit of a proteasome-like degradation complex believed to be a general protein degrading machinery. The sequence is that of ATP-dependent protease subunit HslV from Shewanella frigidimarina (strain NCIMB 400).